The primary structure comprises 117 residues: Protein MGF 110-11L (117 aa).

The chain crosses the membrane as a helical span at residues 3–23 (VFLGLLLGYSTILILTYQSPA). A glycan (N-linked (GlcNAc...) asparagine; by host) is linked at N62. Helical transmembrane passes span 69-89 (YYCF…FAIC) and 94-114 (LCTT…SQPI).

Belongs to the asfivirus MGF 110 family.

It localises to the host membrane. Functionally, plays a role in virus cell tropism, and may be required for efficient virus replication in macrophages. This is Protein MGF 110-11L from African swine fever virus (isolate Warthog/Namibia/Wart80/1980) (ASFV).